Here is a 418-residue protein sequence, read N- to C-terminus: 3-phosphoshikimate 1-carboxyvinyltransferase (418 aa).

Residues Lys-26, Ser-27, and Arg-31 each coordinate 3-phosphoshikimate. Lys-26 provides a ligand contact to phosphoenolpyruvate. Residues Gly-97 and Arg-125 each coordinate phosphoenolpyruvate. Residues Ser-170, Ser-171, Gln-172, Asp-297, Asn-320, and Lys-324 each contribute to the 3-phosphoshikimate site. Gln-172 contacts phosphoenolpyruvate. Asp-297 functions as the Proton acceptor in the catalytic mechanism. Phosphoenolpyruvate is bound by residues Arg-328, Arg-375, and Lys-400.

Belongs to the EPSP synthase family. Monomer.

The protein resides in the cytoplasm. The enzyme catalyses 3-phosphoshikimate + phosphoenolpyruvate = 5-O-(1-carboxyvinyl)-3-phosphoshikimate + phosphate. Its pathway is metabolic intermediate biosynthesis; chorismate biosynthesis; chorismate from D-erythrose 4-phosphate and phosphoenolpyruvate: step 6/7. Catalyzes the transfer of the enolpyruvyl moiety of phosphoenolpyruvate (PEP) to the 5-hydroxyl of shikimate-3-phosphate (S3P) to produce enolpyruvyl shikimate-3-phosphate and inorganic phosphate. The polypeptide is 3-phosphoshikimate 1-carboxyvinyltransferase (Pseudomonas syringae pv. tomato (strain ATCC BAA-871 / DC3000)).